Reading from the N-terminus, the 343-residue chain is Uroporphyrinogen decarboxylase (343 aa).

Residues 23 to 27 (RQAGR), Asp73, Tyr150, Ser205, and His322 contribute to the substrate site.

It belongs to the uroporphyrinogen decarboxylase family. As to quaternary structure, homodimer.

Its subcellular location is the cytoplasm. It catalyses the reaction uroporphyrinogen III + 4 H(+) = coproporphyrinogen III + 4 CO2. Its pathway is porphyrin-containing compound metabolism; protoporphyrin-IX biosynthesis; coproporphyrinogen-III from 5-aminolevulinate: step 4/4. In terms of biological role, catalyzes the decarboxylation of four acetate groups of uroporphyrinogen-III to yield coproporphyrinogen-III. The sequence is that of Uroporphyrinogen decarboxylase from Cereibacter sphaeroides (strain KD131 / KCTC 12085) (Rhodobacter sphaeroides).